We begin with the raw amino-acid sequence, 65 residues long: Large ribosomal subunit protein bL35c (65 aa).

The disordered stretch occupies residues serine 18–valine 50. The segment covering isoleucine 22–leucine 44 has biased composition (basic residues).

The protein belongs to the bacterial ribosomal protein bL35 family.

The protein resides in the plastid. It is found in the chloroplast. This Porphyra purpurea (Red seaweed) protein is Large ribosomal subunit protein bL35c.